The chain runs to 58 residues: Ribulose bisphosphate carboxylase large chain (58 aa).

A propeptide spanning residues 1 to 2 (MS) is cleaved from the precursor. P3 carries the N-acetylproline modification. K14 is subject to N6,N6,N6-trimethyllysine.

This sequence belongs to the RuBisCO large chain family. Type I subfamily. In terms of assembly, heterohexadecamer of 8 large chains and 8 small chains.

It localises to the plastid. It is found in the chloroplast. It carries out the reaction 2 (2R)-3-phosphoglycerate + 2 H(+) = D-ribulose 1,5-bisphosphate + CO2 + H2O. The catalysed reaction is D-ribulose 1,5-bisphosphate + O2 = 2-phosphoglycolate + (2R)-3-phosphoglycerate + 2 H(+). RuBisCO catalyzes two reactions: the carboxylation of D-ribulose 1,5-bisphosphate, the primary event in carbon dioxide fixation, as well as the oxidative fragmentation of the pentose substrate in the photorespiration process. Both reactions occur simultaneously and in competition at the same active site. This chain is Ribulose bisphosphate carboxylase large chain (rbcL), found in Euonymus maackii (Maack's spindle tree).